An 804-amino-acid chain; its full sequence is MMTRFACLHLFTMFLFTLLSGSSSAVITTESPLSMGQTLSSANEVYELGFFSPNNTQDQYVGIWFKDTIPRVVVWVANREKPVTDSTAYLAISSSGSLLLLNGKHGTVWSSGVTFSSSGCRAELSDSGNLKVIDNVSERALWQSFDHLGDTLLHTSSLTYNLATAEKRVLTSWKSYTDPSPGDFLGQITPQVPSQGFVMRGSTPYWRSGPWAKTRFTGIPFMDESYTGPFTLHQDVNGSGYLTYFQRDYKLSRITLTSEGSIKMFRDNGMGWELYYEAPKKLCDFYGACGPFGLCVMSPSPMCKCFRGFVPKSVEEWKRGNWTGGCVRHTELDCLGNSTGEDADDFHQIANIKPPDFYEFASSVNAEECHQRCVHNCSCLAFAYIKGIGCLVWNQDLMDAVQFSATGELLSIRLARSELDGNKRKKTIVASIVSLTLFMILGFTAFGVWRCRVEHIAHISKDAWKNDLKPQDVPGLDFFDMHTIQNATNNFSLSNKLGQGGFGSVYKGKLQDGKEIAVKRLSSSSGQGKEEFMNEIVLISKLQHRNLVRVLGCCIEEEEKLLIYEFMVNKSLDTFLFDSRKRLEIDWPKRFDIIQGIARGLLYLHHDSRLRVIHRDLKVSNILLDEKMNPKISDFGLARMYQGTEYQDNTRRVVGTLGYMSPEYAWTGMFSEKSDIYSFGVLMLEIISGEKISRFSYGVEGKTLIAYAWESWSEYRGIDLLDQDLADSCHPLEVGRCIQIGLLCVQHQPADRPNTLELLAMLTTTSDLPSPKQPTFAFHTRDDESLSNDLITVNGMTQSVILGR.

Residues 1-24 (MMTRFACLHLFTMFLFTLLSGSSS) form the signal peptide. The region spanning 25 to 145 (AVITTESPLS…VSERALWQSF (121 aa)) is the Bulb-type lectin domain. The Extracellular segment spans residues 25-427 (AVITTESPLS…ELDGNKRKKT (403 aa)). Asn54, Asn135, and Asn237 each carry an N-linked (GlcNAc...) asparagine glycan. The EGF-like; atypical domain maps to 279 to 315 (PKKLCDFYGACGPFGLCVMSPSPMCKCFRGFVPKSVE). 2 cysteine pairs are disulfide-bonded: Cys283–Cys295 and Cys289–Cys303. N-linked (GlcNAc...) asparagine glycosylation is found at Asn321, Asn337, and Asn376. The PAN domain occupies 334–416 (CLGNSTGEDA…GELLSIRLAR (83 aa)). 2 disulfide bridges follow: Cys369-Cys390 and Cys373-Cys379. A helical transmembrane segment spans residues 428 to 448 (IVASIVSLTLFMILGFTAFGV). Topologically, residues 449 to 804 (WRCRVEHIAH…GMTQSVILGR (356 aa)) are cytoplasmic. The 286-residue stretch at 491 to 776 (FSLSNKLGQG…DLPSPKQPTF (286 aa)) folds into the Protein kinase domain. ATP-binding positions include 497–505 (LGQGGFGSV) and Lys519. Residues Ser525 and Ser540 each carry the phosphoserine modification. The interval 580 to 597 (RKRLEIDWPKRFDIIQGI) is caM-binding. Asp616 serves as the catalytic Proton acceptor. 2 positions are modified to phosphoserine: Ser620 and Ser633. Thr650 bears the Phosphothreonine mark. Residues Ser693 and Ser787 each carry the phosphoserine modification.

Belongs to the protein kinase superfamily. Ser/Thr protein kinase family.

It localises to the cell membrane. The enzyme catalyses L-seryl-[protein] + ATP = O-phospho-L-seryl-[protein] + ADP + H(+). It catalyses the reaction L-threonyl-[protein] + ATP = O-phospho-L-threonyl-[protein] + ADP + H(+). This Arabidopsis thaliana (Mouse-ear cress) protein is G-type lectin S-receptor-like serine/threonine-protein kinase At1g61500.